Here is a 124-residue protein sequence, read N- to C-terminus: Large ribosomal subunit protein bL12 (124 aa).

Belongs to the bacterial ribosomal protein bL12 family. In terms of assembly, homodimer. Part of the ribosomal stalk of the 50S ribosomal subunit. Forms a multimeric L10(L12)X complex, where L10 forms an elongated spine to which 2 to 4 L12 dimers bind in a sequential fashion. Binds GTP-bound translation factors.

In terms of biological role, forms part of the ribosomal stalk which helps the ribosome interact with GTP-bound translation factors. Is thus essential for accurate translation. The polypeptide is Large ribosomal subunit protein bL12 (Paracoccus denitrificans (strain Pd 1222)).